We begin with the raw amino-acid sequence, 930 residues long: Translation initiation factor IF-2 (930 aa).

The disordered stretch occupies residues 51–325; sequence PGAGKSAAKP…TREIGGVKVP (275 aa). Composition is skewed to low complexity over residues 56–111 and 121–162; these read SAAK…KPGV and TPAA…GNNP. Over residues 263–295 the composition is skewed to gly residues; sequence RPGGGPGGGPGRPGGPGGRGGRGNAQGAFGRGG. Positions 296 to 307 are enriched in basic residues; the sequence is GPRKGRKSKRAK. Residues 308-320 are compositionally biased toward basic and acidic residues; that stretch reads RQEFEQQHTREIG. In terms of domain architecture, tr-type G spans 422–596; sequence PRPAVVTVMG…LTADAALELT (175 aa). Residues 431–438 form a G1 region; sequence GHVDHGKT. 431–438 serves as a coordination point for GTP; that stretch reads GHVDHGKT. The segment at 456–460 is G2; sequence GITQH. The interval 481-484 is G3; sequence DTPG. GTP-binding positions include 481-485 and 535-538; these read DTPGH and NKID. A G4 region spans residues 535–538; the sequence is NKID. Residues 571 to 573 form a G5 region; sequence SAR.

The protein belongs to the TRAFAC class translation factor GTPase superfamily. Classic translation factor GTPase family. IF-2 subfamily.

Its subcellular location is the cytoplasm. Functionally, one of the essential components for the initiation of protein synthesis. Protects formylmethionyl-tRNA from spontaneous hydrolysis and promotes its binding to the 30S ribosomal subunits. Also involved in the hydrolysis of GTP during the formation of the 70S ribosomal complex. This Micrococcus luteus (strain ATCC 4698 / DSM 20030 / JCM 1464 / CCM 169 / CCUG 5858 / IAM 1056 / NBRC 3333 / NCIMB 9278 / NCTC 2665 / VKM Ac-2230) (Micrococcus lysodeikticus) protein is Translation initiation factor IF-2.